The primary structure comprises 520 residues: Ubiquitin carboxyl-terminal hydrolase MINDY-1 (520 aa).

Residues 1–155 (MADSCADTVD…ENEGAVAGAM (155 aa)) form a disordered region. Residues 26–37 (KNEDLEQTKPQK) show a composition bias toward basic and acidic residues. Residues 43–54 (TEESSACVSQIK) are compositionally biased toward polar residues. Positions 77-86 (ATSSASVTSK) are enriched in low complexity. Composition is skewed to polar residues over residues 93 to 112 (VINSQSYTPSQSEATPSFSM) and 132 to 146 (SAKSARDGNQVSVQE). Cys-189 serves as the catalytic Nucleophile. The active-site Proton acceptor is the His-371. Disordered regions lie at residues 422–441 (SQKPSAAAAQPSTQQQQQMQ) and 467–520 (ELAR…CCIL). The tract at residues 441 to 479 (QIDQDYLVAMSLQQEQGEAPGPLSDLELARQLQQEEYQQ) is ubiquitin-binding domain (UBD). Over residues 469–498 (ARQLQQEEYQQPQTQQQQQQQPSAGQMRGQ) the composition is skewed to low complexity. Basic and acidic residues predominate over residues 511-520 (KKEETDCCIL).

The protein belongs to the MINDY deubiquitinase family. FAM63 subfamily.

It catalyses the reaction Thiol-dependent hydrolysis of ester, thioester, amide, peptide and isopeptide bonds formed by the C-terminal Gly of ubiquitin (a 76-residue protein attached to proteins as an intracellular targeting signal).. Hydrolase that can specifically remove 'Lys-48'-linked conjugated ubiquitin from proteins. May play a regulatory role at the level of protein turnover. This chain is Ubiquitin carboxyl-terminal hydrolase MINDY-1 (mindy1), found in Danio rerio (Zebrafish).